A 141-amino-acid polypeptide reads, in one-letter code: Hemoglobin subunit alpha (141 aa).

The Globin domain maps to 1 to 141; sequence VLSPADKSNV…VSTVLVSKYR (141 aa). A Phosphoserine modification is found at S3. An N6-succinyllysine mark is found at K7 and K11. K16 bears the N6-acetyllysine; alternate mark. At K16 the chain carries N6-succinyllysine; alternate. Y24 carries the phosphotyrosine modification. S35 bears the Phosphoserine mark. K40 is modified (N6-succinyllysine). S49 carries the post-translational modification Phosphoserine. Residue H58 coordinates O2. H87 contributes to the heme b binding site. S102 carries the post-translational modification Phosphoserine. Phosphothreonine is present on T108. Position 124 is a phosphoserine (S124). T134 carries the phosphothreonine modification. S138 is subject to Phosphoserine.

This sequence belongs to the globin family. As to quaternary structure, heterotetramer of two alpha chains and two beta chains. As to expression, red blood cells.

Its function is as follows. Involved in oxygen transport from the lung to the various peripheral tissues. Functionally, hemopressin acts as an antagonist peptide of the cannabinoid receptor CNR1. Hemopressin-binding efficiently blocks cannabinoid receptor CNR1 and subsequent signaling. This Chalinolobus morio (Chocolate-wattled bat) protein is Hemoglobin subunit alpha (HBA).